The following is a 50-amino-acid chain: Large ribosomal subunit protein bL32c (50 aa).

The protein belongs to the bacterial ribosomal protein bL32 family.

It is found in the plastid. The protein localises to the chloroplast. This Lotus japonicus (Lotus corniculatus var. japonicus) protein is Large ribosomal subunit protein bL32c.